We begin with the raw amino-acid sequence, 234 residues long: UPF0104 membrane protein MJ1078 (234 aa).

Transmembrane regions (helical) follow at residues 32–52, 70–90, 123–143, 164–184, and 198–218; these read VGTVFIERVFDLVAMISLLFI, IKWGVIIILFLIILIFGFLIV, LITLSFTGWFIEGLTVYFIFL, LTAIPLTPSGLGVVEYALIYI, and VLILYRLISYFSIVLFGAIMF.

This sequence belongs to the UPF0104 family.

Its subcellular location is the cell membrane. In Methanocaldococcus jannaschii (strain ATCC 43067 / DSM 2661 / JAL-1 / JCM 10045 / NBRC 100440) (Methanococcus jannaschii), this protein is UPF0104 membrane protein MJ1078.